Consider the following 366-residue polypeptide: Alanine racemase (366 aa).

K40 (proton acceptor; specific for D-alanine) is an active-site residue. N6-(pyridoxal phosphate)lysine is present on K40. Residue R136 coordinates substrate. Catalysis depends on Y263, which acts as the Proton acceptor; specific for L-alanine. Position 310 (M310) interacts with substrate.

It belongs to the alanine racemase family. Requires pyridoxal 5'-phosphate as cofactor.

The enzyme catalyses L-alanine = D-alanine. It participates in amino-acid biosynthesis; D-alanine biosynthesis; D-alanine from L-alanine: step 1/1. Its function is as follows. Catalyzes the interconversion of L-alanine and D-alanine. May also act on other amino acids. This chain is Alanine racemase (alr), found in Streptococcus pyogenes serotype M5 (strain Manfredo).